We begin with the raw amino-acid sequence, 941 residues long: MAGAAAAVAAGAAAGAAAAAVSVAAPGRASAPPPPPPVYCVCRQPYDVNRFMIECDICKDWFHGSCVGVEEHHAVDIDLYHCPNCAVLHGSSLMKKRRNWHRHDYTEIDDGSKPVQAGTRTFIKELRSRVFPSADEIIIKMHGSQLTQRYLEKHGFDVPIMVPKLDDLGLRLPSPTFSVMDVERYVGGDKVIDVIDVARQADSKMTLHNYVKYFMNPNRPKVLNVISLEFSDTKMSELVEVPDIAKKLSWVENYWPDDSVFPKPFVQKYCLMGVQDSYTDFHIDFGGTSVWYHVLWGEKIFYLIKPTDENLARYESWSSSVTQSEVFFGDKVDKCYKCVVKQGHTLFVPTGWIHAVLTSQDCMAFGGNFLHNLNIGMQLRCYEMEKRLKTPDLFKFPFFEAICWFVAKNLLETLKELREDGFQPQTYLVQGVKALHTALKLWMKKELVSEHAFEIPDNVRPGHLIKELSKVIRAIEEENGKPVKSQGIPIVCPVSRSSNEATSPYHSRRKMRKLRDHNVRTPSNLDILELHTREVLKRLEMCPWEEDILSSKLNGKFNKHLQPSSTVPEWRAKDNDLRLLLTNGRIIKDERQPFADQSLYTADSENEEDKRRTKKAKMKIEESSGVEGVEHEESQKPLNGFFTRVKSELRSRSSGYSDISESEDSGPECTALKSIFTTEESESSGDEKKQEITSNFKEESNVMRNFLQKSQKPSRSEIPIKRECPTSTSTEEEAIQGMLSMAGLHYSTCLQRQIQSTDCSGERNSLQDPSSCHGSNHEVRQLYRYDKPVECGYHVKTEDPDLRTSSWIKQFDTSRFHPQDLSRSQKCIRKEGSSEISQRVQSRNYVDSSGSSLQNGKYMQNSNLTSGACQISNGSLSPERPVGETSFSVPLHPTKRPASNPPPISNQATKGKRPKKGMATAKQRLGKILKLNRNGHARFFV.

The segment at 37 to 88 (PVYCVCRQPYDVNRFMIECDICKDWFHGSCVGVEEHHAVDIDLYHCPNCAVL) adopts a PHD-type zinc-finger fold. The linker stretch occupies residues 97–114 (RRNWHRHDYTEIDDGSKP). Residues 230–386 (FSDTKMSELV…MQLRCYEMEK (157 aa)) enclose the JmjC domain. Substrate is bound at residue T279. The Fe cation site is built by H282 and D284. K299 serves as a coordination point for substrate. Residue H354 participates in Fe cation binding. Disordered stretches follow at residues 597–633 (QSLY…EHEE), 677–700 (TTEE…KEES), and 819–921 (QDLS…MATA). A Phosphoserine modification is found at S604. 2 stretches are compositionally biased toward basic and acidic residues: residues 618–633 (MKIE…EHEE) and 685–700 (GDEK…KEES). Positions 834–876 (SEISQRVQSRNYVDSSGSSLQNGKYMQNSNLTSGACQISNGSL) are enriched in polar residues.

Belongs to the JHDM1 histone demethylase family. JHDM1D subfamily. Requires Fe(2+) as cofactor.

It is found in the nucleus. It carries out the reaction N(6),N(6)-dimethyl-L-lysyl(9)-[histone H3] + 2 2-oxoglutarate + 2 O2 = L-lysyl(9)-[histone H3] + 2 formaldehyde + 2 succinate + 2 CO2. The enzyme catalyses N(6),N(6)-dimethyl-L-lysyl(27)-[histone H3] + 2 2-oxoglutarate + 2 O2 = L-lysyl(27)-[histone H3] + 2 formaldehyde + 2 succinate + 2 CO2. The catalysed reaction is N(6),N(6)-dimethyl-L-lysyl(36)-[histone H3] + 2-oxoglutarate + O2 = N(6)-methyl-L-lysyl(36)-[histone H3] + formaldehyde + succinate + CO2. It catalyses the reaction N(6)-methyl-L-lysyl(20)-[histone H4] + 2-oxoglutarate + O2 = L-lysyl(20)-[histone H4] + formaldehyde + succinate + CO2. In terms of biological role, histone demethylase required for brain development. Specifically demethylates dimethylated 'Lys-9', 'Lys-27' and 'Lys-36' (H3K9me2, H3K27me2, H3K36me2, respectively) of histone H3 and monomethylated histone H4 'Lys-20' residue (H4K20Me1), thereby playing a central role in histone code. Specifically binds trimethylated 'Lys-4' of histone H3 (H3K4me3), affecting histone demethylase specificity: in presence of H3K4me3, it has no demethylase activity toward H3K9me2, while it has high activity toward H3K27me2. Demethylates H3K9me2 in absence of H3K4me3. Has activity toward H4K20Me1 only when nucleosome is used as a substrate and when not histone octamer is used as substrate. This chain is Lysine-specific demethylase 7A (KDM7A), found in Homo sapiens (Human).